We begin with the raw amino-acid sequence, 646 residues long: Acetyl-coenzyme A synthetase (646 aa).

Residues 190 to 193 (RAGK) and Thr-309 contribute to the CoA site. ATP contacts are provided by residues 385–387 (GEP), 409–414 (DTWWQT), Asp-498, and Arg-513. Position 521 (Ser-521) interacts with CoA. Arg-524 contacts ATP. Val-535, His-537, and Val-540 together coordinate Mg(2+). Arg-582 is a CoA binding site. Residue Lys-607 is modified to N6-acetyllysine.

It belongs to the ATP-dependent AMP-binding enzyme family. The cofactor is Mg(2+). Post-translationally, acetylated. Deacetylation by the SIR2-homolog deacetylase activates the enzyme.

It carries out the reaction acetate + ATP + CoA = acetyl-CoA + AMP + diphosphate. Catalyzes the conversion of acetate into acetyl-CoA (AcCoA), an essential intermediate at the junction of anabolic and catabolic pathways. AcsA undergoes a two-step reaction. In the first half reaction, AcsA combines acetate with ATP to form acetyl-adenylate (AcAMP) intermediate. In the second half reaction, it can then transfer the acetyl group from AcAMP to the sulfhydryl group of CoA, forming the product AcCoA. In Pseudoalteromonas atlantica (strain T6c / ATCC BAA-1087), this protein is Acetyl-coenzyme A synthetase.